The chain runs to 143 residues: Large ribosomal subunit protein uL15 (143 aa).

Basic residues-rich tracts occupy residues 1–13 (MIRK…KQRG) and 23–38 (KKHR…GNAG). The interval 1–38 (MIRKSKKITKQRGSRTCGYGEAKKHRGAGHRGGRGNAG) is disordered.

It belongs to the universal ribosomal protein uL15 family. As to quaternary structure, part of the 50S ribosomal subunit.

Its function is as follows. Binds to the 23S rRNA. The chain is Large ribosomal subunit protein uL15 from Methanococcus vannielii.